Reading from the N-terminus, the 540-residue chain is Kinesin light chain (540 aa).

Positions 34–138 (LETSVKGVKE…NKHLKYMASI (105 aa)) form a coiled coil. TPR repeat units lie at residues 206-239 (LRTL…LEKT), 248-281 (ATML…REKC), 290-323 (AATL…REKV), 332-365 (AKQL…YESK), 374-407 (AKTK…AHER), and 456-489 (TTTL…KKQH).

The protein belongs to the kinesin light chain family. As to quaternary structure, oligomeric complex composed of two heavy chains and two light chains. Interacts with unc-83; the interaction is direct. Interacts with unc-33; the interaction regulates unc-33 neurite localization. Interacts with casy-1.

The protein resides in the cytoplasm. It localises to the cytoskeleton. It is found in the nucleus envelope. Functionally, kinesin is a microtubule-associated force-producing protein that may play a role in organelle transport. The light chain may function in coupling of cargo to the heavy chain or in the modulation of its ATPase activity. Recruits unc-83 (within the unc-83-unc-84 LINC complex) to the nuclear envelope during nuclear migration to mediate the link between the nuclear envelope and the microtubule cytoskeleton in hypodermal precursor cells. The polypeptide is Kinesin light chain (Caenorhabditis elegans).